The chain runs to 105 residues: Guanidinium exporter (105 aa).

The helical transmembrane segment at 1–21 (MSWIILVIAGLLEVVWAVGLK) threads the bilayer. Residues 22–28 (YTHGFSR) are Cytoplasmic-facing. Residues 29-49 (LTPSVITVTAMIVSMALLAWA) form a helical membrane-spanning segment. The Periplasmic portion of the chain corresponds to 50-57 (MKSLPVGT). A helical membrane pass occupies residues 58 to 78 (AYAVWTGIGAVGAAITGIVLL). The Cytoplasmic segment spans residues 79–81 (GES). The chain crosses the membrane as a helical span at residues 82 to 102 (ANPMRLASLALIVLGIIGLKL). Topologically, residues 103–105 (STH) are periplasmic.

This sequence belongs to the drug/metabolite transporter (DMT) superfamily. Small multidrug resistance (SMR) (TC 2.A.7.1) family. Gdx/SugE subfamily.

The protein resides in the cell inner membrane. Guanidinium ion exporter. Couples guanidinium export to the proton motive force, exchanging one guanidinium ion for two protons. In Escherichia coli O157:H7, this protein is Guanidinium exporter.